Reading from the N-terminus, the 238-residue chain is tRNA (guanine-N(7)-)-methyltransferase (238 aa).

4 residues coordinate S-adenosyl-L-methionine: Glu70, Asp95, Asp122, and Asp145. Asp145 is a catalytic residue. Substrate contacts are provided by residues Lys149, Asp181, and 216–219; that span reads TKFE.

Belongs to the class I-like SAM-binding methyltransferase superfamily. TrmB family.

It catalyses the reaction guanosine(46) in tRNA + S-adenosyl-L-methionine = N(7)-methylguanosine(46) in tRNA + S-adenosyl-L-homocysteine. The protein operates within tRNA modification; N(7)-methylguanine-tRNA biosynthesis. Its function is as follows. Catalyzes the formation of N(7)-methylguanine at position 46 (m7G46) in tRNA. The polypeptide is tRNA (guanine-N(7)-)-methyltransferase (Neisseria meningitidis serogroup A / serotype 4A (strain DSM 15465 / Z2491)).